Here is a 395-residue protein sequence, read N- to C-terminus: Tyrosine--tRNA ligase 2 (395 aa).

The 'HIGH' region signature appears at 42–51 (PTAPDIHLGH). A 'KMSKS' region motif is present at residues 226 to 230 (KMSKS). Residue Lys-229 coordinates ATP. In terms of domain architecture, S4 RNA-binding spans 334 to 394 (IAISNLLKEA…GKRKFARVTI (61 aa)).

It belongs to the class-I aminoacyl-tRNA synthetase family. TyrS type 2 subfamily. Homodimer.

It is found in the cytoplasm. It catalyses the reaction tRNA(Tyr) + L-tyrosine + ATP = L-tyrosyl-tRNA(Tyr) + AMP + diphosphate + H(+). In terms of biological role, catalyzes the attachment of tyrosine to tRNA(Tyr) in a two-step reaction: tyrosine is first activated by ATP to form Tyr-AMP and then transferred to the acceptor end of tRNA(Tyr). The polypeptide is Tyrosine--tRNA ligase 2 (Vibrio cholerae serotype O1 (strain ATCC 39315 / El Tor Inaba N16961)).